We begin with the raw amino-acid sequence, 419 residues long: Peptide chain release factor subunit 1 (419 aa).

Belongs to the eukaryotic release factor 1 family. As to quaternary structure, heterodimer of two subunits, one of which binds GTP.

Its subcellular location is the cytoplasm. Its function is as follows. Directs the termination of nascent peptide synthesis (translation) in response to the termination codons UAA, UAG and UGA. The protein is Peptide chain release factor subunit 1 of Methanococcus maripaludis (strain C7 / ATCC BAA-1331).